Consider the following 440-residue polypeptide: Serine hydroxymethyltransferase (440 aa).

(6S)-5,6,7,8-tetrahydrofolate-binding positions include L119 and 123 to 125 (GHL). An N6-(pyridoxal phosphate)lysine modification is found at K228. 370–372 (SPF) is a binding site for (6S)-5,6,7,8-tetrahydrofolate.

It belongs to the SHMT family. In terms of assembly, homodimer. It depends on pyridoxal 5'-phosphate as a cofactor.

It is found in the cytoplasm. The enzyme catalyses (6R)-5,10-methylene-5,6,7,8-tetrahydrofolate + glycine + H2O = (6S)-5,6,7,8-tetrahydrofolate + L-serine. It participates in one-carbon metabolism; tetrahydrofolate interconversion. The protein operates within amino-acid biosynthesis; glycine biosynthesis; glycine from L-serine: step 1/1. Catalyzes the reversible interconversion of serine and glycine with tetrahydrofolate (THF) serving as the one-carbon carrier. This reaction serves as the major source of one-carbon groups required for the biosynthesis of purines, thymidylate, methionine, and other important biomolecules. Also exhibits THF-independent aldolase activity toward beta-hydroxyamino acids, producing glycine and aldehydes, via a retro-aldol mechanism. The chain is Serine hydroxymethyltransferase from Chlorobium luteolum (strain DSM 273 / BCRC 81028 / 2530) (Pelodictyon luteolum).